A 680-amino-acid chain; its full sequence is Fermitin family homolog 2 (680 aa).

The interval 40 to 81 (HIGGVMLKLVEKLDVKKDWSDHALWWEKKRTWLLKTHWTLDK) is interaction with membranes containing phosphatidylinositol phosphate. The tract at residues 141 to 165 (LKKPRDPTKKKKKKLDDQSEDEALE) is disordered. Ser-159, Ser-181, Ser-339, and Ser-351 each carry phosphoserine. The 473-residue stretch at 189–661 (MTPTYDAHDG…GYIFLSTRAK (473 aa)) folds into the FERM domain. Residues 380–476 (KVFKPKKLTL…WMAACRLASK (97 aa)) enclose the PH domain. Lys-383 contacts a 1,2-diacyl-sn-glycero-3-phospho-(1D-myo-inositol-3,4,5-trisphosphate). Ser-666 bears the Phosphoserine mark.

It belongs to the kindlin family. Interacts with ILK. Interacts with FBLIM1. Interacts with ITGB1 and ITGB3. Interacts with active, unphosphorylated CTNNB1. Identified in a complex with CTNNB1 and TCF7L2/TCF4. Interacts with ITGB1; the interaction is inhibited in presence of ITGB1BP1. As to expression, ubiquitous. Found in numerous tumor tissues.

It is found in the cytoplasm. The protein resides in the cell cortex. The protein localises to the cytoskeleton. Its subcellular location is the stress fiber. It localises to the cell junction. It is found in the focal adhesion. The protein resides in the membrane. The protein localises to the cell projection. Its subcellular location is the lamellipodium membrane. It localises to the nucleus. It is found in the myofibril. The protein resides in the sarcomere. The protein localises to the i band. Its subcellular location is the cell surface. Functionally, scaffolding protein that enhances integrin activation mediated by TLN1 and/or TLN2, but activates integrins only weakly by itself. Binds to membranes enriched in phosphoinositides. Enhances integrin-mediated cell adhesion onto the extracellular matrix and cell spreading; this requires both its ability to interact with integrins and with phospholipid membranes. Required for the assembly of focal adhesions. Participates in the connection between extracellular matrix adhesion sites and the actin cytoskeleton and also in the orchestration of actin assembly and cell shape modulation. Recruits FBLIM1 to focal adhesions. Plays a role in the TGFB1 and integrin signaling pathways. Stabilizes active CTNNB1 and plays a role in the regulation of transcription mediated by CTNNB1 and TCF7L2/TCF4 and in Wnt signaling. The polypeptide is Fermitin family homolog 2 (FERMT2) (Homo sapiens (Human)).